A 397-amino-acid chain; its full sequence is MVIKPKIRGFICTNAHPVGCSEHVQEQINYVKQQGALKNAPKNVLVIGASTGYGLASRITAAFGGGAKTLGIFFEKEGTERKTGSAGWYNTAAFQNAADEAGLWSKNINGDAFSNEIKQKAIDTIKADLGKVDLIIYSLASPRRTDPNTGEVFSSTLKPIGNAVTTKNLNTSKREIDEITVEAANQDDIDNTIKVMGGEDWEMWIDALKQADVLADNFKTTAYTYIGKELTWPIYGHATIGKAKEDLDRATAAIKASTSDLNGEAYVSSLNAVVTQASSAIPIMPLYISALFKVMKADGTYEGTIEQIQALFSENLYGDTPRFDEGGHLFQNYKELEDDVQVRIQAIWDKVDTSSIDELTDYVGYHNEFLRLFGFGIQGVDYEQEVDPVQPIANMID.

NAD(+) contacts are provided by residues 48-53 (GASTGY), 74-75 (FE), 111-112 (DA), and 139-140 (LA). Residue Tyr-225 participates in substrate binding. The active-site Proton donor is the Tyr-235. NAD(+) is bound by residues Lys-244 and 273 to 275 (VVT).

Belongs to the TER reductase family. Monomer.

The catalysed reaction is a 2,3-saturated acyl-[ACP] + NAD(+) = a (2E)-enoyl-[ACP] + NADH + H(+). It participates in lipid metabolism; fatty acid biosynthesis. In terms of biological role, involved in the final reduction of the elongation cycle of fatty acid synthesis (FAS II). Catalyzes the reduction of a carbon-carbon double bond in an enoyl moiety that is covalently linked to an acyl carrier protein (ACP). This chain is Enoyl-[acyl-carrier-protein] reductase [NADH], found in Pseudoalteromonas translucida (strain TAC 125).